The primary structure comprises 462 residues: Bifunctional enzyme LpxC/FabZ (462 aa).

A UDP-3-O-acyl-N-acetylglucosamine deacetylase region spans residues 1-302; it reads MQKQQTLKDK…MARLIRKEIK (302 aa). Positions 78, 260, and 264 each coordinate Zn(2+). His287 serves as the catalytic Proton donor. Residues 303-462 are 3-hydroxyacyl-[acyl-carrier-protein] dehydratase; that stretch reads QNEAQAPVYN…FMAQIIQNKE (160 aa). His364 is a catalytic residue.

The protein in the N-terminal section; belongs to the LpxC family. This sequence in the C-terminal section; belongs to the thioester dehydratase family. Requires Zn(2+) as cofactor.

It is found in the cytoplasm. It catalyses the reaction a UDP-3-O-[(3R)-3-hydroxyacyl]-N-acetyl-alpha-D-glucosamine + H2O = a UDP-3-O-[(3R)-3-hydroxyacyl]-alpha-D-glucosamine + acetate. The enzyme catalyses a (3R)-hydroxyacyl-[ACP] = a (2E)-enoyl-[ACP] + H2O. Its pathway is glycolipid biosynthesis; lipid IV(A) biosynthesis; lipid IV(A) from (3R)-3-hydroxytetradecanoyl-[acyl-carrier-protein] and UDP-N-acetyl-alpha-D-glucosamine: step 2/6. Its function is as follows. Catalyzes the hydrolysis of UDP-3-O-myristoyl-N-acetylglucosamine to form UDP-3-O-myristoylglucosamine and acetate, the committed step in lipid A biosynthesis. Functionally, involved in unsaturated fatty acids biosynthesis. Catalyzes the dehydration of short chain beta-hydroxyacyl-ACPs and long chain saturated and unsaturated beta-hydroxyacyl-ACPs. The polypeptide is Bifunctional enzyme LpxC/FabZ (lpxC/fabZ) (Porphyromonas gingivalis (strain ATCC BAA-308 / W83)).